Reading from the N-terminus, the 78-residue chain is Acyl carrier protein (78 aa).

The Carrier domain occupies 2 to 77 (SDIASRVKAI…QAISYIEEAK (76 aa)). At Ser-37 the chain carries O-(pantetheine 4'-phosphoryl)serine.

Belongs to the acyl carrier protein (ACP) family. In terms of processing, 4'-phosphopantetheine is transferred from CoA to a specific serine of apo-ACP by AcpS. This modification is essential for activity because fatty acids are bound in thioester linkage to the sulfhydryl of the prosthetic group.

Its subcellular location is the cytoplasm. Its pathway is lipid metabolism; fatty acid biosynthesis. Functionally, carrier of the growing fatty acid chain in fatty acid biosynthesis. This is Acyl carrier protein from Flavobacterium johnsoniae (strain ATCC 17061 / DSM 2064 / JCM 8514 / BCRC 14874 / CCUG 350202 / NBRC 14942 / NCIMB 11054 / UW101) (Cytophaga johnsonae).